The chain runs to 553 residues: MVDMGGLDNLIANTAYLQARKTSDADSKELQRRRRSLMLPGPQSCEQLRQAMPADFNSLCEQQPIGRRLFRDFLATVPAYQEAMGFLEEVQSWELAEEGPAKGSTLQALVATCAVAPNPGQPHSFLSPALVTKCQAATTDEERASLVEQAKAEAMAFLQDQPFREFLVSPFYDKFLQWKVFEMQPVSDKYFEEFRVLGKGGFGEVCAVQVKNTGKMYACKKLDKKRLKKKSGEKMALSEKEILEKVSSPFVVSLAYAFESKSHLCLVMSLMNGGDLKFHIYSVGERGLDMNRVIFYSAQMTCGVLHLHSLGIVYRDLKPENVLLDDLGNCRLSDLGLAVQIQDGKPVTQRAGTNGYMAPEILMEKASYSYPVDWFAMGCSIYEMVAGRTPFKDYKEKISKEDLKQRTLKEEVRFQHQSFTEEAKDICRLFLAKTPEQRLGSREKSDDPRKHHFFKTINFPRLEAGLVDPPFVPDPSVVYAKDVDEIEDFSEVRGVEFDDKDKQFFQRFATGAVPIAWQEEIIETGLFEELNDPNRPAGCGEGNSSRSGVCLLL.

Serine 36 carries the post-translational modification Phosphoserine; by PKA. Positions 56 to 176 (FNSLCEQQPI…LVSPFYDKFL (121 aa)) constitute an RGS domain. The 264-residue stretch at 191–454 (FEEFRVLGKG…SDDPRKHHFF (264 aa)) folds into the Protein kinase domain. Residues 197–205 (LGKGGFGEV) and lysine 220 each bind ATP. Aspartate 316 functions as the Proton acceptor in the catalytic mechanism. The AGC-kinase C-terminal domain occupies 455–520 (KTINFPRLEA…GAVPIAWQEE (66 aa)). Cysteine 550 carries the post-translational modification Cysteine methyl ester. Cysteine 550 carries the S-geranylgeranyl cysteine lipid modification. Residues 551–553 (LLL) constitute a propeptide, removed in mature form.

Belongs to the protein kinase superfamily. AGC Ser/Thr protein kinase family. GPRK subfamily. Interacts (when prenylated) with PDE6D; this promotes release from membranes. Autophosphorylated in vitro at Ser-490. Phosphorylation at Ser-36 is regulated by light and activated by cAMP.

Its subcellular location is the membrane. The catalysed reaction is L-threonyl-[rhodopsin] + ATP = O-phospho-L-threonyl-[rhodopsin] + ADP + H(+). The enzyme catalyses L-seryl-[rhodopsin] + ATP = O-phospho-L-seryl-[rhodopsin] + ADP + H(+). Its activity is regulated as follows. Inhibited by phosphorylation of Ser-36. Its function is as follows. Retina-specific kinase involved in the shutoff of the photoresponse and adaptation to changing light conditions via cone opsin phosphorylation, including rhodopsin (RHO). In Sus scrofa (Pig), this protein is Rhodopsin kinase GRK7 (GRK7).